The chain runs to 1938 residues: Myosin-4 (1938 aa).

One can recognise a Myosin N-terminal SH3-like domain in the interval 33-82 (DAKSSVFVADPKESFVKATVQSREGGKVTAKTEAGATVTVKEDQVFPMNP). Serine 36 is subject to Phosphoserine. Phosphothreonine occurs at positions 64 and 69. In terms of domain architecture, Myosin motor spans 86 to 781 (DKIEDMAMMT…LLGLLEEMRD (696 aa)). Residue 179 to 186 (GESGAGKT) participates in ATP binding. Position 389 is a phosphotyrosine (tyrosine 389). Serine 392 is modified (phosphoserine). Threonine 419 carries the post-translational modification Phosphothreonine. A Phosphotyrosine modification is found at tyrosine 424. Residues 658–680 (LNKLMTNLRSTHPHFVRCIIPNE) are actin-binding. Histidine 756 is subject to Pros-methylhistidine. The actin-binding stretch occupies residues 760–774 (KFGHTKVFFKAGLLG). The IQ domain maps to 784-813 (LAQLITRTQAMCRGFLARVEYKKMVERRES). A coiled-coil region spans residues 845 to 1926 (SAETEKEMAN…ESQVNKLRVK (1082 aa)). Phosphoserine occurs at positions 1091, 1095, 1161, and 1236. Threonine 1240 bears the Phosphothreonine mark. Position 1242 is a phosphoserine (serine 1242). At threonine 1254 the chain carries Phosphothreonine. At serine 1260 the chain carries Phosphoserine. Threonine 1264 carries the phosphothreonine modification. Position 1277 is a phosphoserine (serine 1277). Threonine 1285 is subject to Phosphothreonine. Residues serine 1287, serine 1291, serine 1302, and serine 1305 each carry the phosphoserine modification. Tyrosine 1463 carries the phosphotyrosine modification. Phosphothreonine is present on threonine 1466. Serine 1473 bears the Phosphoserine mark. Tyrosine 1491 carries the phosphotyrosine modification. Position 1494 is a phosphoserine (serine 1494). Threonine 1500 carries the phosphothreonine modification. Position 1513 is a phosphoserine (serine 1513). Phosphothreonine is present on threonine 1516. 7 positions are modified to phosphoserine: serine 1541, serine 1553, serine 1573, serine 1599, serine 1602, serine 1713, and serine 1725. A phosphothreonine mark is found at threonine 1729 and threonine 1735. Serine 1738 is modified (phosphoserine).

It belongs to the TRAFAC class myosin-kinesin ATPase superfamily. Myosin family. As to quaternary structure, muscle myosin is a hexameric protein that consists of 2 heavy chain subunits (MHC), 2 alkali light chain subunits (MLC) and 2 regulatory light chain subunits (MLC-2).

Its subcellular location is the cytoplasm. It is found in the myofibril. Muscle contraction. The protein is Myosin-4 (MYH4) of Oryctolagus cuniculus (Rabbit).